The primary structure comprises 103 residues: Ubiquitin-related modifier 1 (103 aa).

Glycine 103 carries the post-translational modification 1-thioglycine. Residue glycine 103 forms a Glycyl lysine isopeptide (Gly-Lys) (interchain with K-? in acceptor proteins) linkage.

The protein belongs to the URM1 family. In terms of processing, C-terminal thiocarboxylation occurs in 2 steps, it is first acyl-adenylated (-COAMP) via the hesA/moeB/thiF part of UBA4, then thiocarboxylated (-COSH) via the rhodanese domain of UBA4.

Its subcellular location is the cytoplasm. It participates in tRNA modification; 5-methoxycarbonylmethyl-2-thiouridine-tRNA biosynthesis. Its function is as follows. Acts as a sulfur carrier required for 2-thiolation of mcm(5)S(2)U at tRNA wobble positions of cytosolic tRNA(Lys), tRNA(Glu) and tRNA(Gln). Serves as sulfur donor in tRNA 2-thiolation reaction by being thiocarboxylated (-COSH) at its C-terminus by the MOCS3 homolog UBA4. The sulfur is then transferred to tRNA to form 2-thiolation of mcm(5)S(2)U. Prior mcm(5) tRNA modification by the elongator complex is required for 2-thiolation. Also acts as a ubiquitin-like protein (UBL) that is covalently conjugated via an isopeptide bond to lysine residues of target proteins such as AHP1. The thiocarboxylated form serves as substrate for conjugation and oxidative stress specifically induces the formation of UBL-protein conjugates. In Vanderwaltozyma polyspora (strain ATCC 22028 / DSM 70294 / BCRC 21397 / CBS 2163 / NBRC 10782 / NRRL Y-8283 / UCD 57-17) (Kluyveromyces polysporus), this protein is Ubiquitin-related modifier 1.